A 386-amino-acid polypeptide reads, in one-letter code: S-adenosylmethionine:tRNA ribosyltransferase-isomerase (386 aa).

Belongs to the QueA family. In terms of assembly, monomer.

The protein resides in the cytoplasm. It carries out the reaction 7-aminomethyl-7-carbaguanosine(34) in tRNA + S-adenosyl-L-methionine = epoxyqueuosine(34) in tRNA + adenine + L-methionine + 2 H(+). It functions in the pathway tRNA modification; tRNA-queuosine biosynthesis. In terms of biological role, transfers and isomerizes the ribose moiety from AdoMet to the 7-aminomethyl group of 7-deazaguanine (preQ1-tRNA) to give epoxyqueuosine (oQ-tRNA). This chain is S-adenosylmethionine:tRNA ribosyltransferase-isomerase, found in Rickettsia canadensis (strain McKiel).